Consider the following 352-residue polypeptide: Biotin synthase (352 aa).

The Radical SAM core domain occupies 44–262 (NRVQVSTLLS…LAVARIMMPK (219 aa)). Residues C59, C63, and C66 each contribute to the [4Fe-4S] cluster site. [2Fe-2S] cluster contacts are provided by C103, C134, C194, and R266.

This sequence belongs to the radical SAM superfamily. Biotin synthase family. Homodimer. It depends on [4Fe-4S] cluster as a cofactor. The cofactor is [2Fe-2S] cluster.

It carries out the reaction (4R,5S)-dethiobiotin + (sulfur carrier)-SH + 2 reduced [2Fe-2S]-[ferredoxin] + 2 S-adenosyl-L-methionine = (sulfur carrier)-H + biotin + 2 5'-deoxyadenosine + 2 L-methionine + 2 oxidized [2Fe-2S]-[ferredoxin]. The protein operates within cofactor biosynthesis; biotin biosynthesis; biotin from 7,8-diaminononanoate: step 2/2. In terms of biological role, catalyzes the conversion of dethiobiotin (DTB) to biotin by the insertion of a sulfur atom into dethiobiotin via a radical-based mechanism. The sequence is that of Biotin synthase from Pseudomonas aeruginosa (strain UCBPP-PA14).